The chain runs to 413 residues: 2,3-diketo-5-methylthiopentyl-1-phosphate enolase (413 aa).

Residue Lys98 is the Proton acceptor of the active site. Substrate-binding positions include Lys147, Lys173–Glu176, His264, Gly337, and Gly359–Gly360. The Mg(2+) site is built by Lys173, Asp175, and Glu176. An N6-carboxylysine modification is found at Lys173.

It belongs to the RuBisCO large chain family. Type IV subfamily. Homodimer. Requires Mg(2+) as cofactor.

The enzyme catalyses 5-methylsulfanyl-2,3-dioxopentyl phosphate = 2-hydroxy-5-methylsulfanyl-3-oxopent-1-enyl phosphate. Its pathway is amino-acid biosynthesis; L-methionine biosynthesis via salvage pathway; L-methionine from S-methyl-5-thio-alpha-D-ribose 1-phosphate: step 3/6. Functionally, catalyzes the enolization of 2,3-diketo-5-methylthiopentyl-1-phosphate (DK-MTP-1-P) into 2-hydroxy-3-keto-5-methylthiopentenyl-1-phosphate (HK-MTPenyl-1-P). The sequence is that of 2,3-diketo-5-methylthiopentyl-1-phosphate enolase (mtnW) from Geobacillus kaustophilus (strain HTA426).